Reading from the N-terminus, the 449-residue chain is MRYLPKSESERRQMLEACGVSTPEELFAHLPDAVRLNRPLNLAPGISEYEIVQYFRERAEQNANGYASFLGAGVYNHYRPVLVDTVVSRGEFLTSYTPYQAEIAQGTLTTIFEFQTMICQLTGMDVANASMYDGSTAVPEAAMMAVRATGKGRVLISRTVHPEYREVLGTYAKHQGMPVQEFGYVAESGGLDLEDLERKMDDLTGAVIIQTPNFFGIVEQVKAAAEIAHKRGALLVVIFTEAVSLGLLEPPADADIVAGELQSFAISPSYGGPYAGIIAVKEKYIRQVPGRLVGQSLDSRGNRAFCLTLSTREQHIRREKATSNICTNQALIALMATVFMTVYGKQGLRELAEQNLAKAHYLASKLKPRFTGKFFNEFVVRAEGQTPEELNKQLLKKKIIGGLPLGRFYPELADSYLVCATEMTRRADMDALVAATTAQPATETVEVTA.

It belongs to the GcvP family. N-terminal subunit subfamily. As to quaternary structure, the glycine cleavage system is composed of four proteins: P, T, L and H. In this organism, the P 'protein' is a heterodimer of two subunits.

It catalyses the reaction N(6)-[(R)-lipoyl]-L-lysyl-[glycine-cleavage complex H protein] + glycine + H(+) = N(6)-[(R)-S(8)-aminomethyldihydrolipoyl]-L-lysyl-[glycine-cleavage complex H protein] + CO2. Functionally, the glycine cleavage system catalyzes the degradation of glycine. The P protein binds the alpha-amino group of glycine through its pyridoxal phosphate cofactor; CO(2) is released and the remaining methylamine moiety is then transferred to the lipoamide cofactor of the H protein. This chain is Probable glycine dehydrogenase (decarboxylating) subunit 1, found in Solibacter usitatus (strain Ellin6076).